The primary structure comprises 430 residues: Corticosteroid-binding globulin (430 aa).

Residues Met1–Ala22 form the signal peptide. N-linked (GlcNAc...) asparagine glycans are attached at residues Asn119, Asn175, and Asn243. Residue Gln253 participates in cortisol binding. Asn259 carries N-linked (GlcNAc...) asparagine glycosylation. Gln285 contributes to the cortisol binding site. Asn326 carries an N-linked (GlcNAc...) asparagine glycan. Cortisol is bound at residue Trp392.

Belongs to the serpin family. As to expression, expressed by the liver; secreted in plasma.

It localises to the secreted. Functionally, major transport protein for glucocorticoids and progestins in the blood of almost all vertebrate species. The chain is Corticosteroid-binding globulin (SERPINA6) from Ovis aries (Sheep).